Consider the following 299-residue polypeptide: Pyridoxal 5'-phosphate synthase subunit PdxS (299 aa).

Aspartate 24 is a D-ribose 5-phosphate binding site. Lysine 81 serves as the catalytic Schiff-base intermediate with D-ribose 5-phosphate. Position 153 (glycine 153) interacts with D-ribose 5-phosphate. Position 165 (arginine 165) interacts with D-glyceraldehyde 3-phosphate. D-ribose 5-phosphate contacts are provided by residues glycine 219 and glycine 240–serine 241.

Belongs to the PdxS/SNZ family. In the presence of PdxT, forms a dodecamer of heterodimers.

It carries out the reaction aldehydo-D-ribose 5-phosphate + D-glyceraldehyde 3-phosphate + L-glutamine = pyridoxal 5'-phosphate + L-glutamate + phosphate + 3 H2O + H(+). It functions in the pathway cofactor biosynthesis; pyridoxal 5'-phosphate biosynthesis. Its function is as follows. Catalyzes the formation of pyridoxal 5'-phosphate from ribose 5-phosphate (RBP), glyceraldehyde 3-phosphate (G3P) and ammonia. The ammonia is provided by the PdxT subunit. Can also use ribulose 5-phosphate and dihydroxyacetone phosphate as substrates, resulting from enzyme-catalyzed isomerization of RBP and G3P, respectively. This is Pyridoxal 5'-phosphate synthase subunit PdxS from Methanococcus aeolicus (strain ATCC BAA-1280 / DSM 17508 / OCM 812 / Nankai-3).